The primary structure comprises 158 residues: NKG2-F type II integral membrane protein (158 aa).

The segment covering Met1 to Ser12 has biased composition (polar residues). The tract at residues Met1–Lys25 is disordered. The Cytoplasmic portion of the chain corresponds to Met1 to Glu74. The helical; Signal-anchor for type II membrane protein transmembrane segment at Val75–Pro95 threads the bilayer. The Extracellular portion of the chain corresponds to Cys96–Leu158.

Can form disulfide-bonded heterodimer with CD94. In terms of tissue distribution, natural killer cells.

The protein resides in the membrane. May play a role as a receptor for the recognition of MHC class I HLA-E molecules by NK cells. The polypeptide is NKG2-F type II integral membrane protein (KLRC4) (Homo sapiens (Human)).